The chain runs to 407 residues: RING finger protein 44 (407 aa).

The disordered stretch occupies residues 26-58; that stretch reads LSSSPGQLWGRPSNLSVEEHRASAPAGRSPRML. The segment at 355–396 adopts an RING-type; atypical zinc-finger fold; that stretch reads CVVCFSDFEVRQLLRVLPCNHEFHAKCVDKWLKANRTCPICR.

The polypeptide is RING finger protein 44 (Rnf44) (Mus musculus (Mouse)).